A 420-amino-acid polypeptide reads, in one-letter code: UPF0229 protein LPC_3097 (420 aa).

The segment at 83–107 (IAGDRIKRPGGGAGGAGGNASDSGE) is disordered. A compositionally biased stretch (gly residues) spans 91–100 (PGGGAGGAGG).

Belongs to the UPF0229 family.

The polypeptide is UPF0229 protein LPC_3097 (Legionella pneumophila (strain Corby)).